The primary structure comprises 416 residues: Probable carboxypeptidase An18g06210 (416 aa).

A signal peptide spans 1–16; sequence MKSPISLLAAVGVASA. N-linked (GlcNAc...) asparagine glycans are attached at residues asparagine 54, asparagine 70, and asparagine 129. Residue aspartate 142 participates in Zn(2+) binding. The active-site Proton acceptor is the glutamate 174. Glutamate 175 contacts Zn(2+). 2 N-linked (GlcNAc...) asparagine glycosylation sites follow: asparagine 187 and asparagine 319.

Belongs to the peptidase M20A family. It depends on Zn(2+) as a cofactor.

It is found in the secreted. This Aspergillus niger (strain ATCC MYA-4892 / CBS 513.88 / FGSC A1513) protein is Probable carboxypeptidase An18g06210.